A 284-amino-acid chain; its full sequence is Efem/EfeO family lipoprotein (284 aa).

An N-terminal signal peptide occupies residues 1–17 (MKKLTTLLLASTLLIAA). The N-palmitoyl cysteine moiety is linked to residue cysteine 18. Residue cysteine 18 is the site of S-diacylglycerol cysteine attachment.

The protein belongs to the EfeM/EfeO family.

It localises to the cell membrane. The chain is Efem/EfeO family lipoprotein from Staphylococcus aureus (strain MSSA476).